The sequence spans 200 residues: Rho GDP-dissociation inhibitor 2 (200 aa).

The segment at 1–40 is disordered; that stretch reads MTEKAPEPHVEEDDDELDGKLNYKPPPQKSLKELQEMDKD. Threonine 2 carries the post-translational modification N-acetylthreonine. Lysine 20 is modified (N6-acetyllysine). Tyrosine 23 is modified (phosphotyrosine). 5 positions are modified to N6-acetyllysine: lysine 24, lysine 39, lysine 46, lysine 101, and lysine 123. Basic and acidic residues predominate over residues 30-40; sequence SLKELQEMDKD. Serine 144 bears the Phosphoserine mark. An N6-acetyllysine modification is found at lysine 174.

Belongs to the Rho GDI family. In terms of assembly, interacts with RHOA. Interacts with RAC1. Interacts with RAC2. Interacts with CDC42.

The protein localises to the cytoplasm. The protein resides in the cytosol. Regulates the GDP/GTP exchange reaction of the Rho proteins by inhibiting the dissociation of GDP from them, and the subsequent binding of GTP to them. Regulates reorganization of the actin cytoskeleton mediated by Rho family members. The sequence is that of Rho GDP-dissociation inhibitor 2 (ARHGDIB) from Bos taurus (Bovine).